Reading from the N-terminus, the 207-residue chain is MITPAGNCIYLASRSARRRDLLKQIGIRHNILLMREALSRPADVDETPLPEESPADYVYRITHTKSEAGWLRLKQRGLPLLPVLAADTTVVLDGRILGKPQDIGHAEEMLHALSGQEHQVYTAVGLTFQGQTRLRLSTTTVRFRDISPREIQAYIASGEPHDKAGAYAIQGKAAAFIINIDGSYSGVVGLPLFETSQLLEETGISVF.

The active-site Proton acceptor is the aspartate 87.

The protein belongs to the Maf family. YhdE subfamily. A divalent metal cation serves as cofactor.

The protein resides in the cytoplasm. It carries out the reaction dTTP + H2O = dTMP + diphosphate + H(+). The catalysed reaction is UTP + H2O = UMP + diphosphate + H(+). Its function is as follows. Nucleoside triphosphate pyrophosphatase that hydrolyzes dTTP and UTP. May have a dual role in cell division arrest and in preventing the incorporation of modified nucleotides into cellular nucleic acids. This is dTTP/UTP pyrophosphatase from Nitrosomonas europaea (strain ATCC 19718 / CIP 103999 / KCTC 2705 / NBRC 14298).